The sequence spans 190 residues: Hypoxanthine/guanine phosphoribosyltransferase (190 aa).

This sequence belongs to the purine/pyrimidine phosphoribosyltransferase family. Archaeal HPRT subfamily. As to quaternary structure, homodimer.

The protein resides in the cytoplasm. It catalyses the reaction IMP + diphosphate = hypoxanthine + 5-phospho-alpha-D-ribose 1-diphosphate. The catalysed reaction is GMP + diphosphate = guanine + 5-phospho-alpha-D-ribose 1-diphosphate. Its pathway is purine metabolism; IMP biosynthesis via salvage pathway; IMP from hypoxanthine: step 1/1. Catalyzes a salvage reaction resulting in the formation of IMP that is energically less costly than de novo synthesis. The polypeptide is Hypoxanthine/guanine phosphoribosyltransferase (Methanobacterium lacus (strain AL-21)).